A 327-amino-acid polypeptide reads, in one-letter code: DNA primase large subunit PriL (327 aa).

[4Fe-4S] cluster is bound by residues C218, C290, C299, and C307.

This sequence belongs to the eukaryotic-type primase large subunit family. In terms of assembly, heterodimer of a small subunit (PriS) and a large subunit (PriL). It depends on [4Fe-4S] cluster as a cofactor.

Regulatory subunit of DNA primase, an RNA polymerase that catalyzes the synthesis of short RNA molecules used as primers for DNA polymerase during DNA replication. Stabilizes and modulates the activity of the small subunit, increasing the rate of DNA synthesis, and conferring RNA synthesis capability. The DNA polymerase activity may enable DNA primase to also catalyze primer extension after primer synthesis. May also play a role in DNA repair. The sequence is that of DNA primase large subunit PriL from Thermoplasma volcanium (strain ATCC 51530 / DSM 4299 / JCM 9571 / NBRC 15438 / GSS1).